The chain runs to 105 residues: Cell division protein FtsB (105 aa).

Residues 1 to 3 (MGK) are Cytoplasmic-facing. The chain crosses the membrane as a helical span at residues 4–21 (LTLLLLALLVWLQYSLWF). At 22-105 (GKNGLHDYTR…QASGQQQNNR (84 aa)) the chain is on the periplasmic side. Residues 33–62 (NDDVTAQQATNAKLKARNDQLFAEIDDLNG) are a coiled coil.

This sequence belongs to the FtsB family. Part of a complex composed of FtsB, FtsL and FtsQ.

It localises to the cell inner membrane. In terms of biological role, essential cell division protein. May link together the upstream cell division proteins, which are predominantly cytoplasmic, with the downstream cell division proteins, which are predominantly periplasmic. This Klebsiella aerogenes (Enterobacter aerogenes) protein is Cell division protein FtsB.